The primary structure comprises 802 residues: Bifunctional purine biosynthetic protein ADE5,7 (802 aa).

The GARS stretch occupies residues 1–444 (MPEITAFPQP…FRRDIAYRAL (444 aa)). Positions 126–339 (KEFMARHNIP…LAEVLLACVE (214 aa)) constitute an ATP-grasp domain. Position 157 to 218 (157 to 218 (KPFTSGRSVI…EEYLSGPEIS (62 aa))) interacts with ATP. Mg(2+)-binding residues include Glu307 and Asn309. Residues 455-788 (LTYAAAGVSV…EAWVIGEVQE (334 aa)) are AIRS.

It in the N-terminal section; belongs to the GARS family. The protein in the C-terminal section; belongs to the AIR synthase family. As to quaternary structure, homodimer. It depends on Mg(2+) as a cofactor. Mn(2+) serves as cofactor.

Its subcellular location is the cytoplasm. It is found in the cytosol. It carries out the reaction 2-formamido-N(1)-(5-O-phospho-beta-D-ribosyl)acetamidine + ATP = 5-amino-1-(5-phospho-beta-D-ribosyl)imidazole + ADP + phosphate + H(+). The catalysed reaction is 5-phospho-beta-D-ribosylamine + glycine + ATP = N(1)-(5-phospho-beta-D-ribosyl)glycinamide + ADP + phosphate + H(+). It participates in purine metabolism; IMP biosynthesis via de novo pathway; 5-amino-1-(5-phospho-D-ribosyl)imidazole from N(2)-formyl-N(1)-(5-phospho-D-ribosyl)glycinamide: step 2/2. Its pathway is purine metabolism; IMP biosynthesis via de novo pathway; N(1)-(5-phospho-D-ribosyl)glycinamide from 5-phospho-alpha-D-ribose 1-diphosphate: step 2/2. Catalyzes the second and fifth step in the 'de novo' purine biosynthesis pathway; contains phosphoribosylamine--glycine ligase (GARS) and phosphoribosylformylglycinamidine cyclo-ligase (AIRS) activities. The protein is Bifunctional purine biosynthetic protein ADE5,7 of Cryptococcus neoformans var. grubii serotype A (strain H99 / ATCC 208821 / CBS 10515 / FGSC 9487) (Filobasidiella neoformans var. grubii).